A 924-amino-acid polypeptide reads, in one-letter code: Autophagy-related protein 9B (924 aa).

Positions 1–144 (MVSRMGWGGR…QDSPGLRVGP (144 aa)) are disordered. The Cytoplasmic segment spans residues 1-207 (MVSRMGWGGR…KIYSYHQRNG (207 aa)). A compositionally biased stretch (low complexity) spans 17–27 (WGDLGPGSVPL). Positions 28–40 (LPMPLPPPPPPSC) are enriched in pro residues. Over residues 78–88 (LQGTGASQSCH) the composition is skewed to polar residues. Residues 98 to 113 (PTQAQPAMTPASASPS) show a composition bias toward low complexity. Positions 151–154 (YERL) match the Tyrosine-based sorting signal motif. A helical membrane pass occupies residues 208-228 (FACILLEDVFQLGQFIFIVTF). Topologically, residues 229-276 (TTFLLRCVDYNVLFANQPSNHTRPGPFHSKVTLSDAILPSAQCAERIR) are lumenal. The chain crosses the membrane as a helical span at residues 277 to 297 (SSPLLVLLLVLAAGFWLVQLL). Over 298 to 438 (RSVCNLFSYW…GALAARWGRT (141 aa)) the chain is Cytoplasmic. An intramembrane segment occupies 439–459 (VLLLAALNLALSPLVLAWQVL). At 460-526 (HVFYSHVELL…AAPPAPLRTL (67 aa)) the chain is on the cytoplasmic side. Residues 527–547 (LARQLVFFAGALFAALLVLTV) traverse the membrane as a helical segment. At 548-551 (YDED) the chain is on the lumenal side. The chain crosses the membrane as a helical span at residues 552–572 (VLAVEHVLTAMTALGVTATVA). The Cytoplasmic portion of the chain corresponds to 573 to 624 (RSFIPEEQCQGRAPQLLLQTALAHMHYLPEEPGPGGRDRAYRQMAQLLQYRA). Residues 625 to 645 (VSLLEELLSPLLTPLFLLFWF) lie within the membrane without spanning it. Residues 646-924 (RPRALEIIDF…KEPDRASCTD (279 aa)) lie on the Cytoplasmic side of the membrane. The tract at residues 847 to 924 (QQEPWGEAAA…KEPDRASCTD (78 aa)) is disordered. Residues 878 to 890 (SWSSDGSSPASSP) are compositionally biased toward low complexity. Over residues 913–924 (TQKEPDRASCTD) the composition is skewed to basic and acidic residues.

The protein belongs to the ATG9 family. In terms of assembly, homotrimer; forms a homotrimer with a central pore that forms a path between the two membrane leaflets. As to expression, highly expressed in placenta (trophoblast cells) and pituitary gland. Not expressed in vascular endothelial.

The protein localises to the preautophagosomal structure membrane. The catalysed reaction is a 1,2-diacyl-sn-glycero-3-phosphocholine(in) = a 1,2-diacyl-sn-glycero-3-phosphocholine(out). It catalyses the reaction a 1,2-diacyl-sn-glycero-3-phospho-L-serine(in) = a 1,2-diacyl-sn-glycero-3-phospho-L-serine(out). The enzyme catalyses a 1,2-diacyl-sn-glycero-3-phosphoethanolamine(in) = a 1,2-diacyl-sn-glycero-3-phosphoethanolamine(out). Phospholipid scramblase involved in autophagy by mediating autophagosomal membrane expansion. Cycles between the preautophagosomal structure/phagophore assembly site (PAS) and the cytoplasmic vesicle pool and supplies membrane for the growing autophagosome. Lipid scramblase activity plays a key role in preautophagosomal structure/phagophore assembly by distributing the phospholipids that arrive through ATG2 (ATG2A or ATG2B) from the cytoplasmic to the luminal leaflet of the bilayer, thereby driving autophagosomal membrane expansion. In addition to autophagy, also plays a role in necrotic cell death. The sequence is that of Autophagy-related protein 9B (ATG9B) from Homo sapiens (Human).